Here is a 456-residue protein sequence, read N- to C-terminus: RuvB-like 1 (456 aa).

A Glycyl lysine isopeptide (Lys-Gly) (interchain with G-Cter in SUMO2) cross-link involves residue Lys-2. Gly-70–Thr-77 is a binding site for ATP. Lys-225 participates in a covalent cross-link: Glycyl lysine isopeptide (Lys-Gly) (interchain with G-Cter in SUMO1); alternate. Residue Lys-225 forms a Glycyl lysine isopeptide (Lys-Gly) (interchain with G-Cter in SUMO2); alternate linkage. Lys-445 is covalently cross-linked (Glycyl lysine isopeptide (Lys-Gly) (interchain with G-Cter in SUMO2)). Residue Lys-453 is modified to N6-acetyllysine.

Belongs to the RuvB family. Forms homohexameric rings. Can form a dodecamer with RUVBL2 made of two stacked hexameric rings; however, even though RUVBL1 and RUVBL2 are present in equimolar ratio, the oligomeric status of each hexamer is not known. Oligomerization may regulate binding to nucleic acids and conversely, binding to nucleic acids may affect the dodecameric assembly. Interaction of the complex with DHX34 results in conformational changes of the N-terminus of the RUVBL2 subunits, resulting in loss of nucleotide binding ability and ATP hydrolysis of the complex. Interacts with the transcriptional activation domain of MYC. Component of the RNA polymerase II holoenzyme complex. May also act to bridge the LEF1/TCF1-CTNNB1 complex and TBP. Component of the NuA4 histone acetyltransferase complex which contains the catalytic subunit KAT5/TIP60 and the subunits EP400, TRRAP/PAF400, BRD8/SMAP, EPC1, DMAP1/DNMAP1, RUVBL1/TIP49, RUVBL2, ING3, actin, ACTL6A/BAF53A, MORF4L1/MRG15, MORF4L2/MRGX, MRGBP, YEATS4/GAS41, VPS72/YL1 and MEAF6. The NuA4 complex interacts with MYC and the adenovirus E1A protein. RUVBL1 interacts with EP400. Component of a NuA4-related complex which contains EP400, TRRAP/PAF400, SRCAP, BRD8/SMAP, EPC1, DMAP1/DNMAP1, RUVBL1/TIP49, RUVBL2, actin, ACTL6A/BAF53A, VPS72 and YEATS4/GAS41. Component of the BAF53 complex, at least composed of ACTL6A/BAF53A, RUVBL1/TIP49, SMARCA2/BRM, and TRRAP/PAF400. Component of some MLL1/MLL complex, at least composed of the core components KMT2A/MLL1, ASH2L, HCFC1/HCF1, WDR5 and RBBP5, as well as the facultative components BACC1, CHD8, E2F6, HSP70, INO80C, KANSL1, LAS1L, MAX, MCRS1, MGA, MYST1/MOF, PELP1, PHF20, PRP31, RING2, RUVB1/TIP49A, RUVB2/TIP49B, SENP3, TAF1, TAF4, TAF6, TAF7, TAF9 and TEX10. Associates with alpha and gamma tubulins, particularly during metaphase and early anaphase. Interacts with NPAT. Component of the chromatin-remodeling INO80 complex; specifically part of a complex module associated with the helicase ATP-binding and the helicase C-terminal domain of INO80. Interacts with IGHMBP2. Interacts with OFD1. Interacts with HINT1. Component of a complex with USP49 and PSMC5. Component of a SWR1-like complex. Component of the R2TP complex composed at least of RUVBL1, RUVBL2, RPAP3 and PIHD1. Component of the PAQosome complex which is responsible for the biogenesis of several protein complexes and which consists of R2TP complex members RUVBL1, RUVBL2, RPAP3 and PIH1D1, URI complex members PFDN2, PFDN6, PDRG1, UXT and URI1 as well as ASDURF, POLR2E and DNAAF10/WDR92. Interacts with PIH1D1. Interacts with ITFG1. Interacts with WAC; WAC positively regulates MTOR activity by promoting the assembly of the TTT complex composed of TELO2, TTI1 and TTI2 and the RUVBL complex composed of RUVBL1 and RUVBL2 into the TTT-RUVBL complex which leads to the dimerization of the mTORC1 complex and its subsequent activation. The RUVBL1/RUVBL2 complex interacts with ZNHIT1 (via HIT-type zinc finger), ZNHIT3 (via HIT-type zinc finger), ZNHIT6 (via HIT-type zinc finger) and DDX59/ZNHIT5 (via HIT-type zinc finger) in the presence of ADP. Interacts with NOPCHAP1; the interaction is direct and disrupted upon ATP binding. Interacts with SMG1. Interacts with NOP2, NOP56 and NUFIP1. As to quaternary structure, (Microbial infection) Interacts with Mumps L polymerase; this interaction regulates the viral transcription. In terms of tissue distribution, ubiquitously expressed with high expression in heart, skeletal muscle and testis.

It is found in the nucleus matrix. The protein localises to the nucleus. Its subcellular location is the nucleoplasm. It localises to the cytoplasm. The protein resides in the membrane. It is found in the cytoskeleton. The protein localises to the microtubule organizing center. Its subcellular location is the centrosome. It localises to the dynein axonemal particle. The catalysed reaction is ATP + H2O = ADP + phosphate + H(+). Possesses single-stranded DNA-stimulated ATPase and ATP-dependent DNA helicase (3' to 5') activity; hexamerization is thought to be critical for ATP hydrolysis and adjacent subunits in the ring-like structure contribute to the ATPase activity. Component of the NuA4 histone acetyltransferase complex which is involved in transcriptional activation of select genes principally by acetylation of nucleosomal histones H4 and H2A. This modification may both alter nucleosome-DNA interactions and promote interaction of the modified histones with other proteins which positively regulate transcription. This complex may be required for the activation of transcriptional programs associated with oncogene and proto-oncogene mediated growth induction, tumor suppressor mediated growth arrest and replicative senescence, apoptosis, and DNA repair. The NuA4 complex ATPase and helicase activities seem to be, at least in part, contributed by the association of RUVBL1 and RUVBL2 with EP400. NuA4 may also play a direct role in DNA repair when recruited to sites of DNA damage. Component of a SWR1-like complex that specifically mediates the removal of histone H2A.Z/H2AZ1 from the nucleosome. Proposed core component of the chromatin remodeling INO80 complex which exhibits DNA- and nucleosome-activated ATPase activity and catalyzes ATP-dependent nucleosome sliding. Plays an essential role in oncogenic transformation by MYC and also modulates transcriptional activation by the LEF1/TCF1-CTNNB1 complex. Essential for cell proliferation. May be able to bind plasminogen at cell surface and enhance plasminogen activation. This chain is RuvB-like 1, found in Homo sapiens (Human).